Here is a 156-residue protein sequence, read N- to C-terminus: Cytochrome c-type biogenesis protein CcmE 1 (156 aa).

At 1–8 (MNATRKQR) the chain is on the cytoplasmic side. The helical; Signal-anchor for type II membrane protein transmembrane segment at 9–29 (LCLVIGVLAAAALAVTLIVFA) threads the bilayer. Residues 30–156 (LQRNMSYLFT…ATAAPLTTPR (127 aa)) are Periplasmic-facing. Positions 123 and 127 each coordinate heme.

This sequence belongs to the CcmE/CycJ family.

It is found in the cell inner membrane. Its function is as follows. Heme chaperone required for the biogenesis of c-type cytochromes. Transiently binds heme delivered by CcmC and transfers the heme to apo-cytochromes in a process facilitated by CcmF and CcmH. The protein is Cytochrome c-type biogenesis protein CcmE 1 of Xanthomonas oryzae pv. oryzae (strain MAFF 311018).